Here is a 486-residue protein sequence, read N- to C-terminus: Ribosomal RNA small subunit methyltransferase F (486 aa).

S-adenosyl-L-methionine contacts are provided by residues 124–130, Glu148, Asp175, and Asp193; that span reads ASAPGSK. Cys246 acts as the Nucleophile in catalysis.

It belongs to the class I-like SAM-binding methyltransferase superfamily. RsmB/NOP family.

Its subcellular location is the cytoplasm. The enzyme catalyses cytidine(1407) in 16S rRNA + S-adenosyl-L-methionine = 5-methylcytidine(1407) in 16S rRNA + S-adenosyl-L-homocysteine + H(+). Specifically methylates the cytosine at position 1407 (m5C1407) of 16S rRNA. In Shewanella baltica (strain OS155 / ATCC BAA-1091), this protein is Ribosomal RNA small subunit methyltransferase F.